The chain runs to 381 residues: MQVVGTVRVSGCGAVVAPSRRQCRVSAAVLTAAETATATRRRVTHSMPPEKAEVFRSLEGWARSSLLPLLKPVEECWQPTDFLPDSSSEMFEHQVHELRARAAGLPDEYFVVLVGDMITEEALPTYQTMINTLDGVRDETGASACPWAVWTRTWTAEENRHGDILGKYMYLSGRVDMRMVEKTVQYLIGSGMDPGTENNPYLGFVYTSFQERATAVSHGNTARLARAHGDDVLARTCGTIAADEKRHETAYGRIVEQLLRLDPDGAMLAIADMMHKRITMPAHLMHDGRDMNLFDHFAAVAQRLNVYTARDYADIVEFLVKRWKLETLETGLSGEGRRARDFVCGLAKRMRRAAERAEDRAKKDEQRKVKFSWIYDREVIV.

The transit peptide at 1–26 (MQVVGTVRVSGCGAVVAPSRRQCRVS) directs the protein to the chloroplast. Glu-120, Glu-158, His-161, Glu-211, Glu-244, and His-247 together coordinate Fe cation.

This sequence belongs to the fatty acid desaturase type 2 family. Homodimer. Fe(2+) serves as cofactor.

Its subcellular location is the plastid. The protein localises to the chloroplast. It catalyses the reaction octadecanoyl-[ACP] + 2 reduced [2Fe-2S]-[ferredoxin] + O2 + 2 H(+) = (9Z)-octadecenoyl-[ACP] + 2 oxidized [2Fe-2S]-[ferredoxin] + 2 H2O. It participates in lipid metabolism; fatty acid metabolism. Its function is as follows. Converts stearoyl-ACP to oleoyl-ACP by introduction of a cis double bond between carbons 9 and 10 of the acyl chain. This Oryza sativa subsp. indica (Rice) protein is Stearoyl-[acyl-carrier-protein] 9-desaturase 1, chloroplastic.